The primary structure comprises 195 residues: MLIFFEGIDGVGKSTQIELLKSVYNKNYLITKEPGGTLLGEKLREILLESDFKISKTAELFLFLADRAEHFEKVLKFSDKKDIICDRSFVSGIAYALANEQNLDINDLINLNKIALGGKIPNAKFIFLKISKDNLRFRLENRGNFDKIEERGLEYLMKVQKNMSEIFKILKIDALEIDANGDINEIHKKIKEFVK.

7–14 (GIDGVGKS) contributes to the ATP binding site.

Belongs to the thymidylate kinase family.

The enzyme catalyses dTMP + ATP = dTDP + ADP. Phosphorylation of dTMP to form dTDP in both de novo and salvage pathways of dTTP synthesis. The chain is Thymidylate kinase from Campylobacter hominis (strain ATCC BAA-381 / DSM 21671 / CCUG 45161 / LMG 19568 / NCTC 13146 / CH001A).